The following is a 102-amino-acid chain: Citrate lyase acyl carrier protein (102 aa).

O-(phosphoribosyl dephospho-coenzyme A)serine is present on Ser-14.

Belongs to the CitD family. Oligomer with a subunit composition of (alpha,beta,gamma)6.

The protein localises to the cytoplasm. Covalent carrier of the coenzyme of citrate lyase. This Streptococcus pyogenes serotype M2 (strain MGAS10270) protein is Citrate lyase acyl carrier protein.